We begin with the raw amino-acid sequence, 141 residues long: MLEEFKKFALRGNVVDLAVGVIIGAAFGAIVNSLVQDVIMPIIGAVTGGLDFSNYYIPLSSKVQDGMPYAEAKKVGAVIGYGQFLTLAVNFTIIAFVLFMVIRAMNVLKSREEAKPKPVAEVPADVKLLGEIRDLLAARRV.

The next 3 membrane-spanning stretches (helical) occupy residues 14–34 (VVDL…VNSL), 38–58 (VIMP…YYIP), and 82–102 (GQFL…FMVI).

The protein belongs to the MscL family. Homopentamer.

It is found in the cell inner membrane. Channel that opens in response to stretch forces in the membrane lipid bilayer. May participate in the regulation of osmotic pressure changes within the cell. The polypeptide is Large-conductance mechanosensitive channel (Methylorubrum extorquens (strain CM4 / NCIMB 13688) (Methylobacterium extorquens)).